The primary structure comprises 185 residues: Ribosome-recycling factor (185 aa).

This sequence belongs to the RRF family.

It localises to the cytoplasm. Its function is as follows. Responsible for the release of ribosomes from messenger RNA at the termination of protein biosynthesis. May increase the efficiency of translation by recycling ribosomes from one round of translation to another. The chain is Ribosome-recycling factor from Bacillus licheniformis (strain ATCC 14580 / DSM 13 / JCM 2505 / CCUG 7422 / NBRC 12200 / NCIMB 9375 / NCTC 10341 / NRRL NRS-1264 / Gibson 46).